Consider the following 41-residue polypeptide: Large ribosomal subunit protein bL36 (41 aa).

Belongs to the bacterial ribosomal protein bL36 family.

The polypeptide is Large ribosomal subunit protein bL36 (Ruegeria pomeroyi (strain ATCC 700808 / DSM 15171 / DSS-3) (Silicibacter pomeroyi)).